Reading from the N-terminus, the 197-residue chain is dITP/XTP pyrophosphatase (197 aa).

9-14 is a substrate binding site; the sequence is SNNAGK. Asp-70 serves as the catalytic Proton acceptor. Asp-70 serves as a coordination point for Mg(2+). Substrate is bound by residues Ser-71, 153–156, Lys-176, and 181–182; these read FGYD and HR.

This sequence belongs to the HAM1 NTPase family. In terms of assembly, homodimer. Mg(2+) is required as a cofactor.

The catalysed reaction is XTP + H2O = XMP + diphosphate + H(+). The enzyme catalyses dITP + H2O = dIMP + diphosphate + H(+). It catalyses the reaction ITP + H2O = IMP + diphosphate + H(+). In terms of biological role, pyrophosphatase that catalyzes the hydrolysis of nucleoside triphosphates to their monophosphate derivatives, with a high preference for the non-canonical purine nucleotides XTP (xanthosine triphosphate), dITP (deoxyinosine triphosphate) and ITP. Seems to function as a house-cleaning enzyme that removes non-canonical purine nucleotides from the nucleotide pool, thus preventing their incorporation into DNA/RNA and avoiding chromosomal lesions. The sequence is that of dITP/XTP pyrophosphatase from Chromobacterium violaceum (strain ATCC 12472 / DSM 30191 / JCM 1249 / CCUG 213 / NBRC 12614 / NCIMB 9131 / NCTC 9757 / MK).